The following is a 150-amino-acid chain: Globin-2 A chain (150 aa).

At V2 the chain carries Blocked amino end (Val). The region spanning 10 to 150 (CGSEAIKANL…ALVGVVQAAL (141 aa)) is the Globin domain. H102 contacts heme b.

The protein belongs to the globin family. As to quaternary structure, heterotetramer of two alpha chains and two beta chains.

The protein is Globin-2 A chain of Anadara inaequivalvis (Inequivalve ark).